The following is a 341-amino-acid chain: MGQKVNPHGFRLGITTEFSSRWYADRMYRDYVKEDVAIRRMMTRGMERAGISRVEIERTRDRVRVDIHTARPGIVIGRRGAEADRIRADLEKLTNKQVQLNILEVKNPEIDAQLVAQGVAEQLSQRVSFRRAMRKALQSALKAGAKGVRVQVAGRLGGAEMSRTEFYREGRVPLHTLRADIDYGFYEARTTFGRIGVKVWIYKGDVVAGRDHEAARVAARVQQRAVRGRSARREQPAAESPALETAAPAVAEPGAAAAPAAAGADVPVVADTAPAGQGAAERPVAEQPVVTAEPAAAAAVTGETGTGGSNAAPAEPTTSAAAEEAPGGADAPSDATETKEG.

The KH type-2 domain maps to 38–106; sequence IRRMMTRGME…QVQLNILEVK (69 aa). Disordered regions lie at residues 224-246 and 274-341; these read RAVR…LETA and PAGQ…TKEG. Low complexity-rich tracts occupy residues 285 to 303 and 311 to 333; these read AEQP…VTGE and AAPA…DAPS.

It belongs to the universal ribosomal protein uS3 family. As to quaternary structure, part of the 30S ribosomal subunit. Forms a tight complex with proteins S10 and S14.

Functionally, binds the lower part of the 30S subunit head. Binds mRNA in the 70S ribosome, positioning it for translation. This Acidothermus cellulolyticus (strain ATCC 43068 / DSM 8971 / 11B) protein is Small ribosomal subunit protein uS3.